We begin with the raw amino-acid sequence, 229 residues long: Pdp3-interacting factor 1 (229 aa).

D12 acts as the Nucleophile in catalysis. Residues D12, D14, and D176 each coordinate Mg(2+). D14 functions as the Proton donor in the catalytic mechanism.

This sequence belongs to the HAD-like hydrolase superfamily. Component of the mst2 complex composed of at least eaf6, mst2, nto1, pdp3, ptf1, ptf2 and tfg3. The cofactor is Mg(2+).

Its subcellular location is the cytoplasm. It is found in the nucleus. It catalyses the reaction D-ribitol 5-phosphate + H2O = ribitol + phosphate. It carries out the reaction D-sorbitol 6-phosphate + H2O = D-sorbitol + phosphate. The catalysed reaction is sn-glycerol 1-phosphate + H2O = glycerol + phosphate. The enzyme catalyses D-erythrose 4-phosphate + H2O = D-erythrose + phosphate. Component of the mst2 complex which is a highly specific H3 lysine 14 (H3K14) acetyltransferase that functions together with gcn5 to regulate global levels of H3K14 acetylation (H3K14ac), critical for DNA damage checkpoint activation. Functionally, may also function as a sugar alcohol (polyol) phosphatase that prevents accumulation of toxic levels of polyol phosphates, which can impair glycolysis by inhibiting glucose-6-phosphate isomerase. This is Pdp3-interacting factor 1 from Schizosaccharomyces pombe (strain 972 / ATCC 24843) (Fission yeast).